Consider the following 391-residue polypeptide: tRNA (cytosine(38)-C(5))-methyltransferase (391 aa).

One can recognise an SAM-dependent MTase C5-type domain in the interval L4–E391. S-adenosyl-L-methionine is bound by residues V13–G15, D34, I57–E58, and S76. Residue C79 is part of the active site. An S-adenosyl-L-methionine-binding site is contributed by S376.

This sequence belongs to the class I-like SAM-binding methyltransferase superfamily. C5-methyltransferase family. Ubiquitous. Higher expression in testis, ovary and thymus and at much lower levels in spleen, prostate, colon, small intestine, and peripheral blood leukocytes.

It is found in the cytoplasm. The enzyme catalyses cytidine(38) in tRNA + S-adenosyl-L-methionine = 5-methylcytidine(38) in tRNA + S-adenosyl-L-homocysteine + H(+). Functionally, specifically methylates cytosine 38 in the anticodon loop of tRNA(Asp). Has higher activity on tRNA(Asp) modified with queuosine at position 34. The sequence is that of tRNA (cytosine(38)-C(5))-methyltransferase (TRDMT1) from Homo sapiens (Human).